Consider the following 192-residue polypeptide: Elongation factor P (192 aa).

Belongs to the elongation factor P family.

The protein localises to the cytoplasm. It functions in the pathway protein biosynthesis; polypeptide chain elongation. In terms of biological role, involved in peptide bond synthesis. Stimulates efficient translation and peptide-bond synthesis on native or reconstituted 70S ribosomes in vitro. Probably functions indirectly by altering the affinity of the ribosome for aminoacyl-tRNA, thus increasing their reactivity as acceptors for peptidyl transferase. The sequence is that of Elongation factor P from Borrelia garinii subsp. bavariensis (strain ATCC BAA-2496 / DSM 23469 / PBi) (Borreliella bavariensis).